The sequence spans 419 residues: Synaptotagmin-2 (419 aa).

Residues 1–62 (MRNIFKRNQE…NEINKIPLPP (62 aa)) lie on the Vesicular side of the membrane. The disordered stretch occupies residues 16–39 (ATTTATMPIGPVDNSTESGGAGES). A glycan (N-linked (GlcNAc...) asparagine) is linked at Asn29. The chain crosses the membrane as a helical span at residues 63–83 (WALIAIAVVAGLLLLTCCFCI). The Cytoplasmic portion of the chain corresponds to 84 to 419 (CKKCCCKKKK…EVDALLGKNK (336 aa)). The tract at residues 99-138 (GKGMKNAMNMKDMKGGQDDDDAETGLTEGEGEGEEEKEPE) is disordered. Positions 116–136 (DDDDAETGLTEGEGEGEEEKE) are enriched in acidic residues. 2 positions are modified to phosphothreonine: Thr122 and Thr125. The segment at 133-379 (EEKEPENLGK…AIGKIFVGSN (247 aa)) is phospholipid binding. C2 domains follow at residues 139 to 258 (NLGK…EEWR) and 270 to 403 (KLGD…AQWH). Residues Leu169, Asp170, and Asp176 each contribute to the Ca(2+) site. At Thr199 the chain carries Phosphothreonine. A Phosphotyrosine modification is found at Tyr227. The Ca(2+) site is built by Asp228, Phe229, Asp230, Ser233, Lys234, Asp236, Asp301, Asp307, Asp361, and Asp363. Thr383 is modified (phosphothreonine).

Belongs to the synaptotagmin family. In terms of assembly, homotetramer. Heterodimer; heterodimerizes with SYT1 in presence of calcium. Interacts with STON2. Interacts with SCAMP5. Interacts with PRRT2. Requires Ca(2+) as cofactor. Phosphorylation at Thr-199 by WNK1, changes the calcium requirement for SYT2-binding to phospholipid membranes. Expressed at the neuromuscular junction. Expressed in melanocytes.

It localises to the cytoplasmic vesicle. It is found in the secretory vesicle. The protein resides in the synaptic vesicle membrane. Its subcellular location is the chromaffin granule membrane. The protein localises to the cytoplasm. Its function is as follows. Exhibits calcium-dependent phospholipid and inositol polyphosphate binding properties. May have a regulatory role in the membrane interactions during trafficking of synaptic vesicles at the active zone of the synapse. Plays a role in dendrite formation by melanocytes. The chain is Synaptotagmin-2 from Homo sapiens (Human).